Reading from the N-terminus, the 134-residue chain is Transcription antitermination protein NusB (134 aa).

The protein belongs to the NusB family.

Involved in transcription antitermination. Required for transcription of ribosomal RNA (rRNA) genes. Binds specifically to the boxA antiterminator sequence of the ribosomal RNA (rrn) operons. This is Transcription antitermination protein NusB from Shewanella sp. (strain W3-18-1).